A 600-amino-acid chain; its full sequence is Polypeptide N-acetylgalactosaminyltransferase (600 aa).

Residues 1 to 7 (MVRRKLR) are Cytoplasmic-facing. The chain crosses the membrane as a helical; Signal-anchor for type II membrane protein span at residues 8–28 (LLVILAGIWLVGIVVYLFKGD). The Lumenal portion of the chain corresponds to 29–600 (DQSEFEKRVI…KWTFSLSKNR (572 aa)). 5 disulfide bridges follow: C154-C382, C373-C451, C484-C501, C524-C541, and C567-C583. Positions 163–268 (LPDTSVIITF…EKWLEPLLDR (106 aa)) are catalytic subdomain A. Substrate is bound by residues T171, D204, and R229. D252 serves as a coordination point for Mn(2+). S253 lines the substrate pocket. Residue H254 coordinates Mn(2+). The catalytic subdomain B stretch occupies residues 328 to 390 (PIRTPMIAGG…PCSRVGHVFR (63 aa)). Substrate is bound at residue W359. H387 serves as a coordination point for Mn(2+). Residues R390, H393, and Y395 each contribute to the substrate site. A Ricin B-type lectin domain is found at 466-595 (KIPSVQDIAF…SSYTQKWTFS (130 aa)).

It belongs to the glycosyltransferase 2 family. GalNAc-T subfamily. The cofactor is Mn(2+). Post-translationally, O-glycosylated.

The protein resides in the golgi apparatus membrane. It catalyses the reaction L-seryl-[protein] + UDP-N-acetyl-alpha-D-galactosamine = a 3-O-[N-acetyl-alpha-D-galactosaminyl]-L-seryl-[protein] + UDP + H(+). The catalysed reaction is L-threonyl-[protein] + UDP-N-acetyl-alpha-D-galactosamine = a 3-O-[N-acetyl-alpha-D-galactosaminyl]-L-threonyl-[protein] + UDP + H(+). It participates in protein modification; protein glycosylation. With respect to regulation, no change in activity by addition of up to 10% methanol or glycerol, or 5% acetonitrile. 40% reduction in activity by 10% acetonitrile or by lyophilization. Activity requires divalent cations, the best being Mn(2+) (10-20 mM), followed by Co(2+), Mg(2+) and Ca(2+). Loss of activity with Cu(2+) or in the presence of EDTA. Inhibited by UDP, but not by UMP, UTP, ADP or GDP nucleotides. No inhibition by galactose, N-acetylglucosamine or N-acetylgalactosamine sugars. Functionally, catalyzes the initial reaction in O-linked oligosaccharide biosynthesis, the transfer of an N-acetyl-D-galactosamine residue to a serine or threonine residue on the protein receptor. Has a broad substrate specificity. Acceptor peptides include Muc2, Muc5Ac, Muc1a and Muc1a', with Muc2 as the best acceptor. Acts on non-glycosylated and mono- or multi-glycosylated peptide substrates. Transfers preferably to threonine rather than serine residue. Thr-15 is the most preferred site of glycosylation in Muc2 peptide PTTTPITTTTTVTPTPTPTGTQTK having proline residues at position -1, and at positions +1 and +3, where the number represents the distance from the C-terminal and N-terminal hydroxyl amino acid, respectively. Transfer of the N-acetyl-D-galactosamine (GalNAc) is optimal with proline residues at positions -3, -1, +1 and +3, but other amino acids are tolerated, although some, such as phenylalanine, isoleucine or leucine at -1, or lysine at +3 prevent the transfer completely. Second GalNAc is transferred to Muc2 Thr-2 or Thr-13, both of which have two proline residues nearby. Up to nine sites can be glycosylated within Muc2, but eight are used simultaneously since Thr-19 and Thr-21 are not detected to be glycosylated at the same time. Glycosylation is not detected of a potential site, which is next to an already glycosylated site, but only one amino acid is needed in between two glycosylation sites. Ser-5 is the preferred glycosylation site in Muc5Ac peptide GTTPSPVPTTSTTSAP into which up to four GalNAcs can be attached. Only the threonine residues are detected as pontential glycosylation sites in Muc1a APPAHGVTSAPDTRPAPGC and Muc1a' AHGVTSAPDTR peptides. Transferase activity is restricted to UDP-GalNAc as a donor, and none of the nucleotide sugars UDP-Gal, UDP-GlcNAc, GDP-fucose, UDP-xylose, UDP-glucuronic acid or CMP-neuraminic acid are utilized as donors. The sequence is that of Polypeptide N-acetylgalactosaminyltransferase from Biomphalaria glabrata (Bloodfluke planorb).